Reading from the N-terminus, the 301-residue chain is MDIRNEILKLKKEKGAIILAHYYQIPEIQEIADYVGDSYYLSKIAKDCEENIIVFCGVKFMAESAKILSPEKTVILPVMEAGCVMADMATADGLAKLKEEHPNAKVVCYINSSTEVKALSDVCCTSSNAENIINNLEEKEIIFLPDRNLGSYIQEKTPDKKFILWNGFCIVHEAIQKEEILRLKSEHEGILTVAHPECSKEIRDISDFIGSTSEIINFVNNSSNKKFIIITEEGVLHQLRKNGEEKEFYIPYGKMVCRNMKMTTLKDLYESLLKMENKIEIDEDLRLKAYNSLKNMHKLGG.

Positions 21 and 38 each coordinate iminosuccinate. A [4Fe-4S] cluster-binding site is contributed by Cys-83. Iminosuccinate is bound by residues 109–111 (YIN) and Ser-126. Cys-169 lines the [4Fe-4S] cluster pocket. Iminosuccinate-binding positions include 195–197 (HPE) and Thr-212. Cys-257 contributes to the [4Fe-4S] cluster binding site.

It belongs to the quinolinate synthase family. Type 2 subfamily. [4Fe-4S] cluster is required as a cofactor.

It is found in the cytoplasm. It catalyses the reaction iminosuccinate + dihydroxyacetone phosphate = quinolinate + phosphate + 2 H2O + H(+). Its pathway is cofactor biosynthesis; NAD(+) biosynthesis; quinolinate from iminoaspartate: step 1/1. Functionally, catalyzes the condensation of iminoaspartate with dihydroxyacetone phosphate to form quinolinate. This Clostridium perfringens (strain ATCC 13124 / DSM 756 / JCM 1290 / NCIMB 6125 / NCTC 8237 / Type A) protein is Quinolinate synthase.